Reading from the N-terminus, the 231-residue chain is MSEIKDVIVQGLWKNNSALVQLLGLCPLLAVTSTATNALGLGLATTLVLTLTNLTISTLRHWTPAEIRIPIYVMIIASVVSAVQMLINAYAFGLYQSLGIFIPLIVTNCIVVGRAEAFAAKKGPALSALDGFSIGMGATCAMFVLGSLREIIGNGTLFDGADALLGSWAKVLRVEIFHTDSPFLLAMLPPGAFIGLGLMLAGKYLIDEKMKKRRTEAAAERALPNGETGNV.

The next 6 helical transmembrane spans lie at 18–38 (ALVQ…ATNA), 39–59 (LGLG…ISTL), 63–83 (TPAE…VSAV), 86–106 (LINA…PLIV), 125–145 (ALSA…MFVL), and 182–202 (PFLL…MLAG).

Belongs to the NqrDE/RnfAE family. In terms of assembly, the complex is composed of six subunits: RsxA, RsxB, RsxC, RsxD, RsxE and RsxG.

It is found in the cell inner membrane. Functionally, part of a membrane-bound complex that couples electron transfer with translocation of ions across the membrane. Required to maintain the reduced state of SoxR. This is Ion-translocating oxidoreductase complex subunit E from Escherichia coli O127:H6 (strain E2348/69 / EPEC).